The chain runs to 446 residues: NADH oxidase (446 aa).

FAD is bound by residues 7-11 (GTNHA), Asp-32, Cys-42, Val-79, 109-112 (ATGS), Lys-131, and Tyr-158. His-10 functions as the Proton acceptor in the catalytic mechanism. The active-site Redox-active is Cys-42. The residue at position 42 (Cys-42) is a Cysteine sulfinic acid (-SO2H). Ile-159, Asp-178, Tyr-187, and Gly-244 together coordinate NAD(+). Asp-282 is a binding site for FAD. Ala-298 serves as a coordination point for NAD(+). Residues Leu-299, Ala-300, and Ser-301 each coordinate FAD. Gly-329 contacts NAD(+). FAD is bound at residue Phe-427.

Belongs to the class-III pyridine nucleotide-disulfide oxidoreductase family. As to quaternary structure, homodimer. Requires FAD as cofactor.

The enzyme catalyses 2 NADH + O2 + 2 H(+) = 2 NAD(+) + 2 H2O. Its activity is regulated as follows. Inhibited by hydrogen peroxide, sulfhydryl reagents and quinine, but not by EDTA. Functionally, catalyzes the four-electron reduction of molecular oxygen to water. Active on beta-NADH, but not on alpha-NADH, beta-NADPH or alpha-NADPH. Under aerobic conditions, oxygen acts as the electron acceptor. Under anaerobic conditions, DCIP and MB can replace oxygen as the electron acceptor. The chain is NADH oxidase from Lactococcus lactis subsp. cremoris (strain MG1363).